Consider the following 134-residue polypeptide: Z-ring associated protein G (134 aa).

Residues 7–27 traverse the membrane as a helical segment; sequence EIWVAIGIAFIVGLFIGYIIV. Residues 107–134 form a disordered region; the sequence is ATDKSQNEQPRDYSEGASGLFKENKEEN. A compositionally biased stretch (basic and acidic residues) spans 111-120; it reads SQNEQPRDYS.

The protein belongs to the ZapG family.

It localises to the cell inner membrane. Functionally, involved in cell division, cell envelope biogenesis and cell shape maintenance. This is Z-ring associated protein G from Haemophilus influenzae (strain ATCC 51907 / DSM 11121 / KW20 / Rd).